We begin with the raw amino-acid sequence, 228 residues long: Adapter protein MecA (228 aa).

It belongs to the MecA family. As to quaternary structure, homodimer.

Its function is as follows. Enables the recognition and targeting of unfolded and aggregated proteins to the ClpC protease or to other proteins involved in proteolysis. The sequence is that of Adapter protein MecA from Lacticaseibacillus paracasei (strain ATCC 334 / BCRC 17002 / CCUG 31169 / CIP 107868 / KCTC 3260 / NRRL B-441) (Lactobacillus paracasei).